Reading from the N-terminus, the 459-residue chain is Bifunctional protein GlmU (459 aa).

The pyrophosphorylase stretch occupies residues 1–230 (MVKRYAVILA…FDETIGINDR (230 aa)). UDP-N-acetyl-alpha-D-glucosamine is bound by residues 9 to 12 (LAAG), K23, Q73, and 78 to 79 (GT). A Mg(2+)-binding site is contributed by D103. G140, E155, N170, and N228 together coordinate UDP-N-acetyl-alpha-D-glucosamine. N228 serves as a coordination point for Mg(2+). The interval 231-251 (IALAEAERIMRDRICRQHMKN) is linker. The tract at residues 252–459 (GVTIIDPACT…VDRLRGKKKS (208 aa)) is N-acetyltransferase. UDP-N-acetyl-alpha-D-glucosamine is bound by residues R333 and K351. The active-site Proton acceptor is the H363. UDP-N-acetyl-alpha-D-glucosamine is bound by residues Y366 and N377. Acetyl-CoA contacts are provided by residues 386–387 (NY), A423, and R440.

In the N-terminal section; belongs to the N-acetylglucosamine-1-phosphate uridyltransferase family. The protein in the C-terminal section; belongs to the transferase hexapeptide repeat family. In terms of assembly, homotrimer. The cofactor is Mg(2+).

Its subcellular location is the cytoplasm. It carries out the reaction alpha-D-glucosamine 1-phosphate + acetyl-CoA = N-acetyl-alpha-D-glucosamine 1-phosphate + CoA + H(+). The catalysed reaction is N-acetyl-alpha-D-glucosamine 1-phosphate + UTP + H(+) = UDP-N-acetyl-alpha-D-glucosamine + diphosphate. It participates in nucleotide-sugar biosynthesis; UDP-N-acetyl-alpha-D-glucosamine biosynthesis; N-acetyl-alpha-D-glucosamine 1-phosphate from alpha-D-glucosamine 6-phosphate (route II): step 2/2. Its pathway is nucleotide-sugar biosynthesis; UDP-N-acetyl-alpha-D-glucosamine biosynthesis; UDP-N-acetyl-alpha-D-glucosamine from N-acetyl-alpha-D-glucosamine 1-phosphate: step 1/1. It functions in the pathway bacterial outer membrane biogenesis; LPS lipid A biosynthesis. Its function is as follows. Catalyzes the last two sequential reactions in the de novo biosynthetic pathway for UDP-N-acetylglucosamine (UDP-GlcNAc). The C-terminal domain catalyzes the transfer of acetyl group from acetyl coenzyme A to glucosamine-1-phosphate (GlcN-1-P) to produce N-acetylglucosamine-1-phosphate (GlcNAc-1-P), which is converted into UDP-GlcNAc by the transfer of uridine 5-monophosphate (from uridine 5-triphosphate), a reaction catalyzed by the N-terminal domain. The sequence is that of Bifunctional protein GlmU from Geobacillus thermodenitrificans (strain NG80-2).